The following is a 105-amino-acid chain: MNAYWFHYRASIKKEAPNYKRTFLGRARNAFLLILSEAYLLFVFLSYLIRGKSLEKRVNDEAKCSQRCVPLQLANNLAFGDRHKRSANFKKGIANTHSSLICSKP.

The chain crosses the membrane as a helical span at residues Asn-29–Ile-49.

The protein localises to the membrane. This is an uncharacterized protein from Saccharomyces cerevisiae (strain ATCC 204508 / S288c) (Baker's yeast).